We begin with the raw amino-acid sequence, 276 residues long: D-aminoacyl-tRNA deacylase (276 aa).

It belongs to the DtdA deacylase family. In terms of assembly, monomer. Zn(2+) serves as cofactor.

It catalyses the reaction a D-aminoacyl-tRNA + H2O = a tRNA + a D-alpha-amino acid + H(+). The catalysed reaction is glycyl-tRNA(Ala) + H2O = tRNA(Ala) + glycine + H(+). Its function is as follows. D-aminoacyl-tRNA deacylase with broad substrate specificity. By recycling D-aminoacyl-tRNA to D-amino acids and free tRNA molecules, this enzyme counteracts the toxicity associated with the formation of D-aminoacyl-tRNA entities in vivo. The sequence is that of D-aminoacyl-tRNA deacylase from Staphylothermus marinus (strain ATCC 43588 / DSM 3639 / JCM 9404 / F1).